A 62-amino-acid chain; its full sequence is MIPVRCFSCGKVISNYWDEYKRRVTDGEDAAAVLDDLGITRYCCRRMFLSHVELIDVLSPYQ.

4 residues coordinate Zn(2+): C6, C9, C43, and C44.

This sequence belongs to the archaeal Rpo10/eukaryotic RPB10 RNA polymerase subunit family. Part of the RNA polymerase complex. The cofactor is Zn(2+).

Its subcellular location is the cytoplasm. It catalyses the reaction RNA(n) + a ribonucleoside 5'-triphosphate = RNA(n+1) + diphosphate. In terms of biological role, DNA-dependent RNA polymerase (RNAP) catalyzes the transcription of DNA into RNA using the four ribonucleoside triphosphates as substrates. This chain is DNA-directed RNA polymerase subunit Rpo10, found in Methanosarcina mazei (strain ATCC BAA-159 / DSM 3647 / Goe1 / Go1 / JCM 11833 / OCM 88) (Methanosarcina frisia).